Here is a 126-residue protein sequence, read N- to C-terminus: MIFVDTNVFMYAVGRDHPLRMPAREFLEHSLEHQDRLVTSAEAMQELLNAYVPVGRNSTLDSALTLVRALTEIWPVEAADVAHARTLHHRHPGLGARDLLHLACCQRRGVTRIKTFDHTLASAFRS.

Residues 2 to 118 (IFVDTNVFMY…GVTRIKTFDH (117 aa)) form the PINc domain. 2 residues coordinate Mg(2+): Asp-5 and Asp-98.

The protein belongs to the PINc/VapC protein family. The cofactor is Mg(2+).

Toxic component of a type II toxin-antitoxin (TA) system. An RNase. The cognate antitoxin is VapB23. The chain is Ribonuclease VapC23 from Mycobacterium tuberculosis (strain CDC 1551 / Oshkosh).